We begin with the raw amino-acid sequence, 92 residues long: Small ribosomal subunit protein uS19 (92 aa).

The protein belongs to the universal ribosomal protein uS19 family.

Protein S19 forms a complex with S13 that binds strongly to the 16S ribosomal RNA. The polypeptide is Small ribosomal subunit protein uS19 (Borrelia duttonii (strain Ly)).